A 1528-amino-acid chain; its full sequence is Rho GTPase-activating protein 7 (1528 aa).

Disordered regions lie at residues 72 to 94 (DFPG…HEGE), 288 to 310 (MSAE…PPKV), and 372 to 436 (ALST…TKPK). The span at 81–94 (LSKDVDENDSHEGE) shows a compositional bias: basic and acidic residues. The segment covering 374–384 (STSSSPSGTPT) has biased composition (low complexity). Residues 396-436 (GSESGADTISVNQTRVNLSSDTESTDLPSSTPVANSGTKPK) show a composition bias toward polar residues. Positions 448-515 (KAEIEAKEAC…LNKCAVMKLE (68 aa)) constitute an SAM domain. Phosphoserine occurs at positions 523, 526, and 566. 4 disordered regions span residues 558–617 (PKQD…ATPR), 732–764 (RSVS…RTRS), 829–876 (PSGN…SSRL), and 928–990 (SDEG…GVGA). Composition is skewed to low complexity over residues 591 to 605 (VSSV…SLPS) and 734 to 760 (VSNS…SPVT). Residues 710–884 (QLNCVEISAL…RLSIYDNVPG (175 aa)) are focal adhesion-targeting (FAT). A Phosphoserine modification is found at S757. Positions 851-862 (LRRENSSDSPKE) are enriched in basic and acidic residues. The span at 936–948 (ALDSVSPCPSSPK) shows a compositional bias: polar residues. Basic and acidic residues predominate over residues 950–960 (IHLDVDNDRTT). The segment covering 961–972 (PSDLDSTGNSLN) has biased composition (polar residues). The polybasic cluster (PBR) stretch occupies residues 1051–1073 (KHGFSWAVPKFMKRIKVPDYKDR). The Rho-GAP domain maps to 1078–1284 (VPLTVNVQRT…HMIAECKKLF (207 aa)). Residues 1314 to 1521 (GNDDSADYQH…RDSFSNQNTE (208 aa)) enclose the START domain.

As to quaternary structure, interacts with EF1A1, facilitates EF1A1 distribution to the membrane periphery and ruffles upon growth factor stimulation and suppresses cell migration. Interacts with tensin TNS1 (via N-terminus); the interaction is decreased by phosphorylation of TNS1. Interacts with TNS3 and PTEN; in resting cells, interacts with TNS3 (via C2 tensin-type domain) but, following growth factor stimulation, TNS3 and PTEN are phosphorylated which leads to weakened interaction with TNS3 and enhanced interaction with PTEN. Interacts (via C-terminus) with tensin TNS4 (via SH2 domain); the interaction is independent of tyrosine phosphorylation of DLC1. As to expression, highest level of expression in the spleen, with rather lower levels in prostate, testis, ovary, small intestine and colon, but none in the thymus.

It is found in the cytoplasm. It localises to the cell junction. Its subcellular location is the focal adhesion. The protein resides in the membrane. Functions as a GTPase-activating protein for the small GTPases RHOA, RHOB, RHOC and CDC42, terminating their downstream signaling. This induces morphological changes and detachment through cytoskeletal reorganization, playing a critical role in biological processes such as cell migration and proliferation. Also functions in vivo as an activator of the phospholipase PLCD1. Active DLC1 increases cell migration velocity but reduces directionality. Required for growth factor-induced epithelial cell migration; in resting cells, interacts with TNS3 while PTEN interacts with the p85 regulatory subunit of the PI3K kinase complex but growth factor stimulation induces phosphorylation of TNS3 and PTEN, causing them to change their binding preference so that PTEN interacts with DLC1 and TNS3 interacts with p85. The PTEN-DLC1 complex translocates to the posterior of migrating cells to activate RHOA while the TNS3-p85 complex translocates to the leading edge of migrating cells to promote RAC1 activation. The sequence is that of Rho GTPase-activating protein 7 (DLC1) from Homo sapiens (Human).